The sequence spans 366 residues: Carbamoyl phosphate synthase small chain (366 aa).

The segment at 1–174 (MQEIPAILVL…GERYTVDNPD (174 aa)) is CPSase. L-glutamine-binding residues include serine 48, glycine 226, and glycine 228. The 189-residue stretch at 178-366 (HVVAFDYGIK…FTELMERLKN (189 aa)) folds into the Glutamine amidotransferase type-1 domain. The Nucleophile role is filled by cysteine 256. L-glutamine contacts are provided by leucine 257, glutamine 260, asparagine 298, glycine 300, and phenylalanine 301. Active-site residues include histidine 340 and glutamate 342.

Belongs to the CarA family. In terms of assembly, composed of two chains; the small (or glutamine) chain promotes the hydrolysis of glutamine to ammonia, which is used by the large (or ammonia) chain to synthesize carbamoyl phosphate. Tetramer of heterodimers (alpha,beta)4.

It catalyses the reaction hydrogencarbonate + L-glutamine + 2 ATP + H2O = carbamoyl phosphate + L-glutamate + 2 ADP + phosphate + 2 H(+). The catalysed reaction is L-glutamine + H2O = L-glutamate + NH4(+). It participates in amino-acid biosynthesis; L-arginine biosynthesis; carbamoyl phosphate from bicarbonate: step 1/1. It functions in the pathway pyrimidine metabolism; UMP biosynthesis via de novo pathway; (S)-dihydroorotate from bicarbonate: step 1/3. Its function is as follows. Small subunit of the glutamine-dependent carbamoyl phosphate synthetase (CPSase). CPSase catalyzes the formation of carbamoyl phosphate from the ammonia moiety of glutamine, carbonate, and phosphate donated by ATP, constituting the first step of 2 biosynthetic pathways, one leading to arginine and/or urea and the other to pyrimidine nucleotides. The small subunit (glutamine amidotransferase) binds and cleaves glutamine to supply the large subunit with the substrate ammonia. The sequence is that of Carbamoyl phosphate synthase small chain from Chlorobaculum tepidum (strain ATCC 49652 / DSM 12025 / NBRC 103806 / TLS) (Chlorobium tepidum).